The chain runs to 484 residues: Glycogen synthase (484 aa).

K15 provides a ligand contact to ADP-alpha-D-glucose.

It belongs to the glycosyltransferase 1 family. Bacterial/plant glycogen synthase subfamily.

It catalyses the reaction [(1-&gt;4)-alpha-D-glucosyl](n) + ADP-alpha-D-glucose = [(1-&gt;4)-alpha-D-glucosyl](n+1) + ADP + H(+). It functions in the pathway glycan biosynthesis; glycogen biosynthesis. Synthesizes alpha-1,4-glucan chains using ADP-glucose. The protein is Glycogen synthase of Syntrophotalea carbinolica (strain DSM 2380 / NBRC 103641 / GraBd1) (Pelobacter carbinolicus).